The sequence spans 591 residues: Splicing factor U2af large subunit A (591 aa).

Positions 1–215 are disordered; that stretch reads MAEHDAPPES…QSKRMSGFDQ (215 aa). Residues 27 to 36 show a composition bias toward polar residues; that stretch reads SPQQDAQPLS. Basic and acidic residues-rich tracts occupy residues 37–79 and 157–191; these read SRDR…SRDR and RERS…DRDG. RRM domains are found at residues 272-355 and 392-470; these read RRVY…RPTD and DRIF…RANQ.

It belongs to the splicing factor SR family.

It localises to the nucleus. Functionally, necessary for the splicing of pre-mRNA. The protein is Splicing factor U2af large subunit A (U2AF65A) of Triticum aestivum (Wheat).